We begin with the raw amino-acid sequence, 526 residues long: Cytochrome P450 monooxygenase ucsK (526 aa).

A helical transmembrane segment spans residues 7–27; the sequence is PVLAAATAVSFGFYLAGLFVY. Asn403 carries an N-linked (GlcNAc...) asparagine glycan. Cys467 is a binding site for heme.

The protein belongs to the cytochrome P450 family. Heme is required as a cofactor.

Its subcellular location is the membrane. Its pathway is mycotoxin biosynthesis. Its function is as follows. Cytochrome P450 monooxygenase; part of the gene cluster that mediates the biosynthesis of UCS1025A, a member of the pyrrolizidinone family that acts as a strong telomerase inhibitor and displays potent antibacterial and antitumor properties. These compounds share a hemiaminal-containing pyrrolizidinone core fused with a gamma-lactone, giving a furopyrrolizidine that is connected to a decalin fragment. The polyketide synthase module (PKS) of the PKS-NRPS ucsA is responsible for the synthesis of the polyketide backbone via the condensation of an acetyl-CoA starter unit with 6 malonyl-CoA units. The downstream nonribosomal peptide synthetase (NRPS) module then amidates the carboxyl end of the polyketide with a 2S,3S-methylproline derived from L-isoleucine by the 2-oxoglutarate-dependent dioxygenase ucsF which converts L-isoleucine to (4S,5S)-4-methylpyrroline-5-carboxylate that is further converted to 2S,3S-methylproline by the pyrroline-5-carboxylate reductase ucsG. Reductive release of the completed aminoacyl polyketide from the assembly line can form the 3-pyrrolin-2-one structure via an intramolecular Knoevenagel reaction. Because ucsA lacks a designated enoylreductase (ER) domain, the required activity is provided the enoyl reductase ucsL. This keto acyclic precursor is the substrate of the Diels-Alderase ucsH, that catalyzes the Diels-Alder cycloaddition. Oxidation of the 3S-methyl group to a carboxylate by the cytochrome P450 monooxygenase ucsK allows an oxa-Michael cyclization that might involve the reductase/dehydrogenase ucsI and which furnishes the furopyrrolizidine. The oxidase ucsJ likely plays a critical role in stereoselective reduction of the C5-C6 double bond to afford the required R-configured carboxylate group. Further enolization and oxidation at C5 by an unidentified enzyme affords the last intermediate that can undergo oxa-Michael cyclization to yield UCS1025A. The polypeptide is Cytochrome P450 monooxygenase ucsK (Acremonium sp).